The primary structure comprises 439 residues: Histidine--tRNA ligase (439 aa).

The protein belongs to the class-II aminoacyl-tRNA synthetase family. Homodimer.

Its subcellular location is the cytoplasm. The enzyme catalyses tRNA(His) + L-histidine + ATP = L-histidyl-tRNA(His) + AMP + diphosphate + H(+). The protein is Histidine--tRNA ligase of Leptospira interrogans serogroup Icterohaemorrhagiae serovar copenhageni (strain Fiocruz L1-130).